A 488-amino-acid chain; its full sequence is Katanin p60 ATPase-containing subunit A-like 1 (488 aa).

Positions 84 to 184 (FPNPVPEEGP…EQKKFDGTGY (101 aa)) are disordered. A compositionally biased stretch (basic and acidic residues) spans 144–167 (KPDRPNTRDGRGNKAKEEKSKRNA). Residue 246-253 (GPPGTGKT) coordinates ATP.

Belongs to the AAA ATPase family. Katanin p60 subunit A1 subfamily. A-like 1 sub-subfamily.

It localises to the cytoplasm. It is found in the cytoskeleton. The protein resides in the spindle pole. The protein localises to the spindle. The enzyme catalyses n ATP + n H2O + a microtubule = n ADP + n phosphate + (n+1) alpha/beta tubulin heterodimers.. Its function is as follows. Regulates microtubule dynamics in Sertoli cells, a process that is essential for spermiogenesis and male fertility. Severs microtubules in an ATP-dependent manner, promoting rapid reorganization of cellular microtubule arrays. In Danio rerio (Zebrafish), this protein is Katanin p60 ATPase-containing subunit A-like 1 (katnal1).